Here is a 192-residue protein sequence, read N- to C-terminus: UPF0312 protein Ent638_1570 (192 aa).

An N-terminal signal peptide occupies residues 1–22 (MKKRLLGIALGSLLFTTGSAVA).

The protein belongs to the UPF0312 family. Type 1 subfamily.

The protein localises to the periplasm. The sequence is that of UPF0312 protein Ent638_1570 from Enterobacter sp. (strain 638).